The sequence spans 438 residues: Xylose isomerase (438 aa).

Catalysis depends on residues histidine 100 and aspartate 103. Mg(2+) contacts are provided by glutamate 231, glutamate 267, histidine 270, aspartate 295, aspartate 306, aspartate 308, and aspartate 338.

Belongs to the xylose isomerase family. Homotetramer. Requires Mg(2+) as cofactor.

Its subcellular location is the cytoplasm. The enzyme catalyses alpha-D-xylose = alpha-D-xylulofuranose. The sequence is that of Xylose isomerase from Pseudomonas syringae pv. tomato (strain ATCC BAA-871 / DC3000).